The sequence spans 395 residues: S-adenosylmethionine synthase (395 aa).

Position 16 (H16) interacts with ATP. Mg(2+) is bound at residue D18. Residue E44 participates in K(+) binding. Positions 57 and 100 each coordinate L-methionine. The segment at Q100–L110 is flexible loop. Residues D175 to K177, R242 to F243, D251, R257 to K258, A274, and K278 each bind ATP. D251 provides a ligand contact to L-methionine. Residue K282 participates in L-methionine binding.

It belongs to the AdoMet synthase family. As to quaternary structure, homotetramer; dimer of dimers. It depends on Mg(2+) as a cofactor. The cofactor is K(+).

It is found in the cytoplasm. The enzyme catalyses L-methionine + ATP + H2O = S-adenosyl-L-methionine + phosphate + diphosphate. Its pathway is amino-acid biosynthesis; S-adenosyl-L-methionine biosynthesis; S-adenosyl-L-methionine from L-methionine: step 1/1. Functionally, catalyzes the formation of S-adenosylmethionine (AdoMet) from methionine and ATP. The overall synthetic reaction is composed of two sequential steps, AdoMet formation and the subsequent tripolyphosphate hydrolysis which occurs prior to release of AdoMet from the enzyme. The sequence is that of S-adenosylmethionine synthase from Thermus thermophilus (strain ATCC BAA-163 / DSM 7039 / HB27).